The following is a 212-amino-acid chain: MARVAIIDYGINNVRSVRNAVEYCGHEAVVTHGNDGIADASHIILPGVGAFGDAMKKIRDRGLDEILARGVCEAGKPLLAVCLGMQLLAKTSEEHADDGEFFQGLGLIEADVRRLRPKDPDLKIPHMGWNNITKLREHPILVNMRETNLAFYFVHSFAMSCENEDDVVGRATYGQDVTAIVARDNIVGTQFHPEKSQDSGIELMSNFLQWNP.

The Glutamine amidotransferase type-1 domain occupies 3–212; the sequence is RVAIIDYGIN…LMSNFLQWNP (210 aa). Cys-82 serves as the catalytic Nucleophile. Active-site residues include His-192 and Glu-194.

In terms of assembly, heterodimer of HisH and HisF.

It localises to the cytoplasm. It carries out the reaction 5-[(5-phospho-1-deoxy-D-ribulos-1-ylimino)methylamino]-1-(5-phospho-beta-D-ribosyl)imidazole-4-carboxamide + L-glutamine = D-erythro-1-(imidazol-4-yl)glycerol 3-phosphate + 5-amino-1-(5-phospho-beta-D-ribosyl)imidazole-4-carboxamide + L-glutamate + H(+). The catalysed reaction is L-glutamine + H2O = L-glutamate + NH4(+). It participates in amino-acid biosynthesis; L-histidine biosynthesis; L-histidine from 5-phospho-alpha-D-ribose 1-diphosphate: step 5/9. Functionally, IGPS catalyzes the conversion of PRFAR and glutamine to IGP, AICAR and glutamate. The HisH subunit provides the glutamine amidotransferase activity that produces the ammonia necessary to HisF for the synthesis of IGP and AICAR. This chain is Imidazole glycerol phosphate synthase subunit HisH 2, found in Nitrobacter winogradskyi (strain ATCC 25391 / DSM 10237 / CIP 104748 / NCIMB 11846 / Nb-255).